The chain runs to 348 residues: Bifunctional dihydroflavonol 4-reductase/flavanone 4-reductase (348 aa).

Positions 44 and 163 each coordinate NADP(+).

This sequence belongs to the NAD(P)-dependent epimerase/dehydratase family. Dihydroflavonol-4-reductase subfamily.

It carries out the reaction a (2R,3S,4S)-leucoanthocyanidin + NADP(+) = a (2R,3R)-dihydroflavonol + NADPH + H(+). It catalyses the reaction (2S)-flavan-4-ol + NADP(+) = (2S)-flavanone + NADPH + H(+). Bifunctional enzyme involved in flavonoid metabolism. May use dihydroquercetin, dihydrokaempferol, eriodictyol, garbanzol (5-deoxydihydrokaempferol), dihydrofisetin (5-deoxydihydroquercetin), naringenin to a low extent (10%), but not 5-deoxynaringenin or butin (5-deoxyeriodictyol) as substrate. This chain is Bifunctional dihydroflavonol 4-reductase/flavanone 4-reductase (DFR), found in Malus domestica (Apple).